The sequence spans 328 residues: Transcription initiation factor TFIID subunit 8 (328 aa).

The Histone-fold domain maps to 16–83 (RRILNKVVSQ…DVSLALINMG (68 aa)). The disordered stretch occupies residues 229-309 (NRTEDEPSKD…PGTMPSRSLA (81 aa)). Phosphoserine occurs at positions 236, 245, and 255. Positions 239 to 251 (DGEEGDSENEEMD) are enriched in acidic residues. Basic and acidic residues predominate over residues 252 to 264 (GDKSKEEKPELDI). The span at 296 to 309 (NCPTPGTMPSRSLA) shows a compositional bias: polar residues.

It belongs to the TAF8 family. As to quaternary structure, belongs to the TFIID complex which is composed of TATA binding protein (Tbp) and a number of TBP-associated factors (TAFs). Histone fold interacts with N-terminus of Taf10b.

The protein resides in the nucleus. Functionally, TFIID is a multimeric protein complex that plays a central role in mediating promoter responses to various activators and repressors. The chain is Transcription initiation factor TFIID subunit 8 from Drosophila melanogaster (Fruit fly).